The primary structure comprises 241 residues: Fas-associated death domain protein (241 aa).

Residues 1 to 101 form a death-inducing region; it reads MPGNHWYDIL…VNIYQEERLA (101 aa). The region spanning 151 to 237 is the Death domain; the sequence is RKRTAVFNKI…RNDIKRKVEQ (87 aa).

N-terminus interacts with Dredd. Interacts with imd.

The protein localises to the cytoplasm. Functionally, component of the IMD signaling pathway and is required for the host defense against Gram-negative bacteria. Interacts with Dredd, promotes cleavage of Dredd and is necessary and sufficient for enhancing Dredd-induced apoptosis. The polypeptide is Fas-associated death domain protein (Fadd) (Drosophila pseudoobscura pseudoobscura (Fruit fly)).